Reading from the N-terminus, the 389-residue chain is Succinate--CoA ligase [ADP-forming] subunit beta (389 aa).

Positions Lys-9 to Arg-244 constitute an ATP-grasp domain. Residues Lys-46, Gly-53–Gly-55, Glu-99, Thr-102, and Glu-107 each bind ATP. 2 residues coordinate Mg(2+): Asn-199 and Asp-213. Substrate-binding positions include Asn-264 and Gly-321–Val-323.

This sequence belongs to the succinate/malate CoA ligase beta subunit family. Heterotetramer of two alpha and two beta subunits. Mg(2+) serves as cofactor.

It catalyses the reaction succinate + ATP + CoA = succinyl-CoA + ADP + phosphate. The enzyme catalyses GTP + succinate + CoA = succinyl-CoA + GDP + phosphate. It functions in the pathway carbohydrate metabolism; tricarboxylic acid cycle; succinate from succinyl-CoA (ligase route): step 1/1. Its function is as follows. Succinyl-CoA synthetase functions in the citric acid cycle (TCA), coupling the hydrolysis of succinyl-CoA to the synthesis of either ATP or GTP and thus represents the only step of substrate-level phosphorylation in the TCA. The beta subunit provides nucleotide specificity of the enzyme and binds the substrate succinate, while the binding sites for coenzyme A and phosphate are found in the alpha subunit. The chain is Succinate--CoA ligase [ADP-forming] subunit beta from Alcanivorax borkumensis (strain ATCC 700651 / DSM 11573 / NCIMB 13689 / SK2).